The chain runs to 121 residues: Small ribosomal subunit protein uS13 (121 aa).

The disordered stretch occupies residues 94 to 121 (GLPMRGQRTRTNARTRKGPRKGAAALKK).

It belongs to the universal ribosomal protein uS13 family. As to quaternary structure, part of the 30S ribosomal subunit. Forms a loose heterodimer with protein S19. Forms two bridges to the 50S subunit in the 70S ribosome.

Functionally, located at the top of the head of the 30S subunit, it contacts several helices of the 16S rRNA. In the 70S ribosome it contacts the 23S rRNA (bridge B1a) and protein L5 of the 50S subunit (bridge B1b), connecting the 2 subunits; these bridges are implicated in subunit movement. Contacts the tRNAs in the A and P-sites. The protein is Small ribosomal subunit protein uS13 of Delftia acidovorans (strain DSM 14801 / SPH-1).